A 371-amino-acid chain; its full sequence is uncharacterized protein (371 aa).

Transmembrane regions (helical) follow at residues 4 to 24 (LPML…FIYG), 60 to 82 (LIQL…ALYG), 87 to 109 (LWIV…MLSI), 130 to 150 (VFIN…FVAS), 197 to 217 (VVAV…LLPV), 224 to 244 (IYPL…YGLV), 282 to 302 (VPIW…GFHA), and 320 to 340 (FIFY…CMVG).

The protein belongs to the peptide transporter carbon starvation (CstA) (TC 2.A.114) family.

It is found in the cell membrane. This is an uncharacterized protein from Haemophilus influenzae (strain ATCC 51907 / DSM 11121 / KW20 / Rd).